Here is a 624-residue protein sequence, read N- to C-terminus: 1-deoxy-D-xylulose-5-phosphate synthase (624 aa).

Residues histidine 74 and 115–117 (GHS) each bind thiamine diphosphate. Aspartate 146 contributes to the Mg(2+) binding site. Residues 147 to 148 (GA), asparagine 175, tyrosine 286, and glutamate 366 each bind thiamine diphosphate. Residue asparagine 175 coordinates Mg(2+).

Belongs to the transketolase family. DXPS subfamily. As to quaternary structure, homodimer. Mg(2+) is required as a cofactor. The cofactor is thiamine diphosphate.

It catalyses the reaction D-glyceraldehyde 3-phosphate + pyruvate + H(+) = 1-deoxy-D-xylulose 5-phosphate + CO2. It participates in metabolic intermediate biosynthesis; 1-deoxy-D-xylulose 5-phosphate biosynthesis; 1-deoxy-D-xylulose 5-phosphate from D-glyceraldehyde 3-phosphate and pyruvate: step 1/1. Functionally, catalyzes the acyloin condensation reaction between C atoms 2 and 3 of pyruvate and glyceraldehyde 3-phosphate to yield 1-deoxy-D-xylulose-5-phosphate (DXP). This chain is 1-deoxy-D-xylulose-5-phosphate synthase, found in Clostridium kluyveri (strain NBRC 12016).